A 294-amino-acid chain; its full sequence is Flavin-dependent thymidylate synthase (294 aa).

The ThyX domain maps to Gly27 to Tyr250. FAD is bound by residues Thr73, Arg96 to Arg98, and Glu104. Residues Gln93–Arg96, Glu104–Arg108, and Arg189 each bind dUMP. The short motif at Arg96–Ser106 is the ThyX motif element. Residues Asn205–His207 and His211 each bind FAD. DUMP is bound at residue Arg216. The active-site Involved in ionization of N3 of dUMP, leading to its activation is Arg216.

This sequence belongs to the thymidylate synthase ThyX family. In terms of assembly, homotetramer. It depends on FAD as a cofactor.

It catalyses the reaction dUMP + (6R)-5,10-methylene-5,6,7,8-tetrahydrofolate + NADPH + H(+) = dTMP + (6S)-5,6,7,8-tetrahydrofolate + NADP(+). It functions in the pathway pyrimidine metabolism; dTTP biosynthesis. Catalyzes the reductive methylation of 2'-deoxyuridine-5'-monophosphate (dUMP) to 2'-deoxythymidine-5'-monophosphate (dTMP) while utilizing 5,10-methylenetetrahydrofolate (mTHF) as the methyl donor, and NADPH and FADH(2) as the reductant. This is Flavin-dependent thymidylate synthase from Rickettsia prowazekii (strain Madrid E).